The primary structure comprises 545 residues: Threonine--tRNA ligase catalytic subunit (545 aa).

The interval 139–433 (DHRLIGEKLD…LLEHFKGKLP (295 aa)) is catalytic. Zn(2+)-binding residues include Cys231, His282, and His410.

This sequence belongs to the class-II aminoacyl-tRNA synthetase family. As to quaternary structure, homodimer. Probably interacts with its editing subunit. Zn(2+) serves as cofactor.

The protein localises to the cytoplasm. It carries out the reaction tRNA(Thr) + L-threonine + ATP = L-threonyl-tRNA(Thr) + AMP + diphosphate + H(+). Functionally, catalyzes the attachment of threonine to tRNA(Thr) in a two-step reaction: L-threonine is first activated by ATP to form Thr-AMP and then transferred to the acceptor end of tRNA(Thr). Also activates L-serine and transfers it to tRNA(Thr) but cannot deacylate incorrectly charged amino acid; unlike most archaea the editing function is found in a freestanding protein. In Saccharolobus islandicus (strain M.16.4 / Kamchatka #3) (Sulfolobus islandicus), this protein is Threonine--tRNA ligase catalytic subunit.